The sequence spans 176 residues: RNA pyrophosphohydrolase (176 aa).

Residues 6-149 (GYRPNVGIVI…KRDVYRRVMK (144 aa)) enclose the Nudix hydrolase domain. A Nudix box motif is present at residues 38–59 (GGINPGESAEQAMYRELFEEVG).

Belongs to the Nudix hydrolase family. RppH subfamily. A divalent metal cation serves as cofactor.

In terms of biological role, accelerates the degradation of transcripts by removing pyrophosphate from the 5'-end of triphosphorylated RNA, leading to a more labile monophosphorylated state that can stimulate subsequent ribonuclease cleavage. This is RNA pyrophosphohydrolase from Escherichia fergusonii (strain ATCC 35469 / DSM 13698 / CCUG 18766 / IAM 14443 / JCM 21226 / LMG 7866 / NBRC 102419 / NCTC 12128 / CDC 0568-73).